An 875-amino-acid polypeptide reads, in one-letter code: MSDDTVTPMMAQYLEIKAQNPGAILFYRMGDFYEMFFDDAALAAEALDIALTKRGKHRGEDIAMCGVPIHAAEGYLLTLIRKGFRVAIAEQMEDPAEAKKRGSKSVVRREVVRLVTPGTLTEDTLLEARRHNYLCAFAEIRDEAALAWADISTGELSVTACPLPRLMPELARLAPRELLVADERELDWIEEVGCALTPLSRASFDSASAEKRLCALFGVGTLESFGNFTRAELSAMGALVDYLDLTQRGKLPLLRPPVRETVGGTVQIDAATRRNLEITQALAGGRDGSLLSAVDRTVTAPGARLLERRLSSPTRDLGLIHERLGAVRWLTEEPRLREEMRASLRRVPDMDRALSRLALDRAGPRDMAAIRAGLAQAQEIAQRMPAEAPALVTRALEALGGHEALVDLLDQALVAEPPLLARDGGFIAQGFDADLDETRRLRDEGRGVIASMQAGFIEVTGIQSLKIKHNNVLGYFIEVTSTHAEKMLSAPLSERFIHRQTTAGQVRFTTVELSELETRILNAGNRALDLEKMHFAALRTAILDLAGQIGRAARSLAELDLISAFADLAVTEDWTEPEIDDSRAFAIEAGRHPVVERALRRTGTPFVANHCDLSTGETPAVWLITGPNMAGKSTFLRQNALIALLAQAGSFVPARRAHIGLVSQIFSRVGASDDLARGRSTFMVEMVETAAILNQADDRALVILDEIGRGTATWDGLSIAWATLEHLHDRNRCRALFATHYHEMTALAGKLKGVENATVAVKEWEGDVIFLHEVRRGAADRSYGVQVARLAGLPASVIERARTVLDALESGERESGGRRQTLIDDLPLFRAAPPPPAPAAPKTSPVEERLREIQPDDLSPREALKLLYDLRALLT.

626–633 (GPNMAGKS) serves as a coordination point for ATP. Residues 830 to 855 (RAAPPPPAPAAPKTSPVEERLREIQP) are disordered. Over residues 845 to 855 (PVEERLREIQP) the composition is skewed to basic and acidic residues.

This sequence belongs to the DNA mismatch repair MutS family.

This protein is involved in the repair of mismatches in DNA. It is possible that it carries out the mismatch recognition step. This protein has a weak ATPase activity. The chain is DNA mismatch repair protein MutS from Cereibacter sphaeroides (strain ATCC 17023 / DSM 158 / JCM 6121 / CCUG 31486 / LMG 2827 / NBRC 12203 / NCIMB 8253 / ATH 2.4.1.) (Rhodobacter sphaeroides).